The following is a 106-amino-acid chain: MLMLTFASTSSDLLPMSNVFDVQSSVFYNEKNMFYSSSQDFSSCEDSSQFADDSGFFDDSEISSIGYEIGSKLAAMCDDFDAQMMSYSAHASDRSLFHRLLDFFAF.

Positions 73–81 (LAAMCDDFD) are BH3-like.

Interacts with ced-9; the interaction results in ced-4 release from the ced-4/ced-9 complex. Interaction with ced-9 may enhance interaction of ced-9 with drp-1, but not with ced-4. A ced-9/egl-1 complex may recruit drp-1 to the mitochondrial surface.

Its subcellular location is the synapse. Plays a major role in programmed cell death (PCD or apoptosis) by negatively regulating ced-9. Binds to and directly inhibits the activity of ced-9, releasing the cell death activator ced-4 from a ced-9/ced-4 containing protein complex and allowing ced-4 to activate the cell-killing caspase ced-3. Required to activate programmed cell death in the sister cells of the serotonergic neurosecretory motor (NSM) neurons during embryogenesis. Required to activate programmed cell death in the sister cells of the M4 motor neuron and I1 pharyngeal neuron during embryogenesis. During larval development, required for the elimination of transient presynaptic components upstream of ced-9, ced-4 and ced-3 apoptotic pathway. Together with ain-1, a component of the miRNA-induced-silencing complex (miRISC), and probably upstream of ced-3 and ced-4, regulates temporal cell fate patterning during larval development. Has been shown in two studies to be dispensable in mitochondrial dynamics and morphology during early embryonic development. However, one study shows that during larval development, egl-1 is involved in modulating mitochondrial dynamics, perhaps acting by stabilizing the interaction between ced-9 and drp-1 in order to promote mitochondrial fission. Involved in inducing mitochondrial fragmentation during apoptosis, probably acting via ced-9 and dynamin-related protein drp-1. This chain is Programmed cell death activator egl-1, found in Caenorhabditis elegans.